Consider the following 518-residue polypeptide: Putative cytochrome P450 CYP13A6 (518 aa).

Cysteine 463 contacts heme.

This sequence belongs to the cytochrome P450 family. Heme serves as cofactor.

In terms of biological role, cytochromes P450 are a group of heme-thiolate monooxygenases. They oxidize a variety of structurally unrelated compounds, including steroids, fatty acids, and xenobiotics. The polypeptide is Putative cytochrome P450 CYP13A6 (cyp-13A6) (Caenorhabditis elegans).